An 88-amino-acid chain; its full sequence is Small ribosomal subunit protein bS20 (88 aa).

Belongs to the bacterial ribosomal protein bS20 family.

Binds directly to 16S ribosomal RNA. The polypeptide is Small ribosomal subunit protein bS20 (Bartonella henselae (strain ATCC 49882 / DSM 28221 / CCUG 30454 / Houston 1) (Rochalimaea henselae)).